A 797-amino-acid polypeptide reads, in one-letter code: Ubiquitin carboxyl-terminal hydrolase 14 (797 aa).

A UBP-type; degenerate zinc finger spans residues 156–266 (LISEHALTLQ…EHLAHFGIDF (111 aa)). Zn(2+) is bound by residues Cys-180, Cys-183, Cys-200, and His-213. The USP domain occupies 308-796 (TGLVNLGNSC…MGYVYFFQRL (489 aa)). Cys-317 acts as the Nucleophile in catalysis. UBA domains follow at residues 613 to 654 (VANE…LLSH) and 670 to 710 (DIDQ…VFNN). Catalysis depends on His-758, which acts as the Proton acceptor.

This sequence belongs to the peptidase C19 family. Constitutively and ubiquitously expressed (at protein level).

The catalysed reaction is Thiol-dependent hydrolysis of ester, thioester, amide, peptide and isopeptide bonds formed by the C-terminal Gly of ubiquitin (a 76-residue protein attached to proteins as an intracellular targeting signal).. Functionally, recognizes and hydrolyzes the peptide bond at the C-terminal Gly of ubiquitin. Involved in the processing of poly-ubiquitin precursors as well as that of ubiquitinated proteins. Involved in seed and embryo development. The protein is Ubiquitin carboxyl-terminal hydrolase 14 (UBP14) of Arabidopsis thaliana (Mouse-ear cress).